A 511-amino-acid polypeptide reads, in one-letter code: Maturase K (511 aa).

This sequence belongs to the intron maturase 2 family. MatK subfamily.

The protein localises to the plastid. It localises to the chloroplast. Functionally, usually encoded in the trnK tRNA gene intron. Probably assists in splicing its own and other chloroplast group II introns. The sequence is that of Maturase K from Hordeum vulgare subsp. spontaneum (Wild barley).